The following is a 227-amino-acid chain: NAD(P)H-quinone oxidoreductase subunit K, chloroplastic (227 aa).

The [4Fe-4S] cluster site is built by cysteine 43, cysteine 44, cysteine 108, and cysteine 139.

This sequence belongs to the complex I 20 kDa subunit family. NDH is composed of at least 16 different subunits, 5 of which are encoded in the nucleus. Requires [4Fe-4S] cluster as cofactor.

The protein localises to the plastid. It localises to the chloroplast thylakoid membrane. The catalysed reaction is a plastoquinone + NADH + (n+1) H(+)(in) = a plastoquinol + NAD(+) + n H(+)(out). It carries out the reaction a plastoquinone + NADPH + (n+1) H(+)(in) = a plastoquinol + NADP(+) + n H(+)(out). NDH shuttles electrons from NAD(P)H:plastoquinone, via FMN and iron-sulfur (Fe-S) centers, to quinones in the photosynthetic chain and possibly in a chloroplast respiratory chain. The immediate electron acceptor for the enzyme in this species is believed to be plastoquinone. Couples the redox reaction to proton translocation, and thus conserves the redox energy in a proton gradient. The chain is NAD(P)H-quinone oxidoreductase subunit K, chloroplastic from Drimys granadensis.